The primary structure comprises 390 residues: Lipid-A-disaccharide synthase (390 aa).

The protein belongs to the LpxB family.

It catalyses the reaction a lipid X + a UDP-2-N,3-O-bis[(3R)-3-hydroxyacyl]-alpha-D-glucosamine = a lipid A disaccharide + UDP + H(+). Its pathway is bacterial outer membrane biogenesis; LPS lipid A biosynthesis. Functionally, condensation of UDP-2,3-diacylglucosamine and 2,3-diacylglucosamine-1-phosphate to form lipid A disaccharide, a precursor of lipid A, a phosphorylated glycolipid that anchors the lipopolysaccharide to the outer membrane of the cell. This is Lipid-A-disaccharide synthase (lpxB) from Haemophilus influenzae (strain ATCC 51907 / DSM 11121 / KW20 / Rd).